A 192-amino-acid polypeptide reads, in one-letter code: MLLSDRDIRAEIGSGRVALDPFDDAMVQPSSVDVRLDRYFRLFDNHKYAVIDPAEDQPELTRLVEVDPDEAFVLHPGEFVLGSTHETITLPDDVAARLEGKSSLGRLGLLTHSTAGFIDPGFTGHVTLELSNVATLPIMLWPGMKIGQLCFFRLSSPAERPYGSGADGSRYQGQRGPTASRSHVKFHRTHVE.

DCTP contacts are provided by residues 101–106 (KSSLGR), aspartate 119, 127–129 (TLE), glutamine 148, tyrosine 162, and glutamine 174. The Proton donor/acceptor role is filled by glutamate 129. The segment at 162 to 192 (YGSGADGSRYQGQRGPTASRSHVKFHRTHVE) is disordered. Residues 171 to 181 (YQGQRGPTASR) are compositionally biased toward polar residues. Over residues 182–192 (SHVKFHRTHVE) the composition is skewed to basic residues.

Belongs to the dCTP deaminase family. In terms of assembly, homotrimer.

The catalysed reaction is dCTP + 2 H2O = dUMP + NH4(+) + diphosphate. Its pathway is pyrimidine metabolism; dUMP biosynthesis; dUMP from dCTP: step 1/1. In terms of biological role, bifunctional enzyme that catalyzes both the deamination of dCTP to dUTP and the hydrolysis of dUTP to dUMP without releasing the toxic dUTP intermediate. The polypeptide is dCTP deaminase, dUMP-forming (Beutenbergia cavernae (strain ATCC BAA-8 / DSM 12333 / CCUG 43141 / JCM 11478 / NBRC 16432 / NCIMB 13614 / HKI 0122)).